The following is an 845-amino-acid chain: Tyrosine-protein phosphatase corkscrew (845 aa).

SH2 domains are found at residues 6-101 (WFHP…KQPL) and 111-205 (WFHG…RQPF). A Tyrosine-protein phosphatase domain is found at 227–645 (FWEEFESLQQ…KFVYYAVQHY (419 aa)). The tract at residues 289–444 (IRLPTDGDLY…REREREMFKT (156 aa)) is PTPase insert (Cys/Ser-rich). The disordered stretch occupies residues 362 to 402 (SKHKRSESSASSSPSSGSGSGPGSSGTSGVSSVNGPGTPTN). 2 stretches are compositionally biased toward low complexity: residues 369–378 (SSASSSPSSG) and 388–400 (TSGV…PGTP). A Phosphoserine modification is found at Ser-419. Residues Asp-545, 583-589 (CSAGIGR), and Gln-630 each bind substrate. Cys-583 serves as the catalytic Phosphocysteine intermediate. The tract at residues 793-824 (DSLKQQQQREEQAPAGAGKMQQPAPPLRPRPG) is disordered.

This sequence belongs to the protein-tyrosine phosphatase family. Non-receptor class subfamily. As to quaternary structure, interacts with drpr isoform A. Expressed uniformly throughout all tissues during embryogenesis.

The protein resides in the cytoplasm. It carries out the reaction O-phospho-L-tyrosyl-[protein] + H2O = L-tyrosyl-[protein] + phosphate. Required in all receptor tyrosine kinase signaling pathways. Functions downstream of the receptor tyrosine kinase torso, acting in concert with D-Raf via tailless. Also functions downstream of Egfr (epidermal growth factor receptor) and btl (fibroblast growth factor receptor). The SH2 domain suggests that csw effects its role by mediating heteromeric protein interactions. Maternally required for normal determination of cell fates at the termini of the embryo. Required for cell fate specification of the ventral ectoderm, in the developing embryonic CNS and for embryonic tracheal cell migration. Functions during imaginal development for proper formation of adult structures such as eyes, aristae, L5 wing vein and the tarsal claw. Dephosphorylates drpr isoform A which is required for the inhibition by drpr isoform A of glial cell engulfment of axonal debris produced following axonal injury. This Drosophila melanogaster (Fruit fly) protein is Tyrosine-protein phosphatase corkscrew (csw).